Reading from the N-terminus, the 227-residue chain is MPEVSTDDLDERQVQLMAEMCILVDENDRRIGAETKKNCHLNENIERGLLHRAFSVFLFNTENKLLLQQRSDAKITFPGCFTNTCCSHPLSNPSELEENDAIGVRRAAQRRLKAELGIPMEEVPPEEINYLTRIHYKAQSDSIWGEHEIDYILLVKKNVTLNPDPNEIKSYCYVTKEELEELIGKAAHGEIKITPWFQIIADTFLFKWWDNLNRLNLFVDHEKIHRM.

K36 provides a ligand contact to substrate. Mg(2+)-binding residues include H40 and H51. Residues 49–199 (LLHRAFSVFL…EIKITPWFQI (151 aa)) enclose the Nudix hydrolase domain. Positions 70 and 74 each coordinate substrate. C86 (proton acceptor) is an active-site residue. Position 87 (S87) interacts with substrate. E146 and E148 together coordinate Mg(2+). E148 is a catalytic residue. An N6-acetyllysine modification is found at K176.

The protein belongs to the IPP isomerase type 1 family. In terms of assembly, monomer. The cofactor is Mg(2+).

The protein resides in the peroxisome. It catalyses the reaction isopentenyl diphosphate = dimethylallyl diphosphate. The protein operates within isoprenoid biosynthesis; dimethylallyl diphosphate biosynthesis; dimethylallyl diphosphate from isopentenyl diphosphate: step 1/1. Its function is as follows. Catalyzes the 1,3-allylic rearrangement of the homoallylic substrate isopentenyl (IPP) to its highly electrophilic allylic isomer, dimethylallyl diphosphate (DMAPP). The chain is Isopentenyl-diphosphate Delta-isomerase 1 (IDI1) from Bos taurus (Bovine).